We begin with the raw amino-acid sequence, 439 residues long: Methionine aminopeptidase 2-2 (439 aa).

The segment at 1–90 (MAAQAPPTDE…SQLFPDKQYP (90 aa)) is disordered. Basic and acidic residues predominate over residues 10 to 23 (ELSKLSVEDADNKP). The segment covering 35–45 (DEDDSEDDAED) has biased composition (acidic residues). Positions 54–68 (AKKKKKRKPRKKKKN) are enriched in basic residues. Substrate is bound at residue H192. A divalent metal cation contacts are provided by D212, D223, and H292. H300 contacts substrate. E325 and E420 together coordinate a divalent metal cation.

This sequence belongs to the peptidase M24A family. Methionine aminopeptidase eukaryotic type 2 subfamily. Co(2+) serves as cofactor. Zn(2+) is required as a cofactor. The cofactor is Mn(2+). It depends on Fe(2+) as a cofactor.

The protein resides in the cytoplasm. The enzyme catalyses Release of N-terminal amino acids, preferentially methionine, from peptides and arylamides.. Cotranslationally removes the N-terminal methionine from nascent proteins. The N-terminal methionine is often cleaved when the second residue in the primary sequence is small and uncharged (Met-Ala-, Cys, Gly, Pro, Ser, Thr, or Val). This Chaetomium globosum (strain ATCC 6205 / CBS 148.51 / DSM 1962 / NBRC 6347 / NRRL 1970) (Soil fungus) protein is Methionine aminopeptidase 2-2.